A 174-amino-acid polypeptide reads, in one-letter code: Transgelin (174 aa).

The region spanning 3 to 109 (SQLEKEAREW…SIHSFSRYAA (107 aa)) is the Calponin-homology (CH) domain.

As to quaternary structure, binds to actin.

It localises to the cytoplasm. Has actin-binding and actin-bundling activity and is a component of the actin patch. Stabilizes actin filaments against disassembly. Cross-links F-actin and is required for the formation of the contractile F-actin ring. In Schizosaccharomyces pombe (strain 972 / ATCC 24843) (Fission yeast), this protein is Transgelin (stg1).